Consider the following 668-residue polypeptide: Phosphoglycerate transport system sensor protein PgtB (668 aa).

A run of 2 helical transmembrane segments spans residues glycine 20–tryptophan 40 and leucine 342–isoleucine 362. One can recognise an HAMP domain in the interval serine 364 to arginine 416. In terms of domain architecture, Histidine kinase spans threonine 454–aspartate 663. Histidine 457 is subject to Phosphohistidine; by autocatalysis.

The protein localises to the cell inner membrane. The enzyme catalyses ATP + protein L-histidine = ADP + protein N-phospho-L-histidine.. Its function is as follows. Member of the two-component regulatory system PgtB/PgtA that regulates the inducible phosphoglycerate transport system. Activates PgtA by phosphorylation. The protein is Phosphoglycerate transport system sensor protein PgtB (pgtB) of Salmonella typhimurium (strain LT2 / SGSC1412 / ATCC 700720).